The sequence spans 638 residues: Chaperone protein DnaK (638 aa).

T199 is subject to Phosphothreonine; by autocatalysis. A disordered region spans residues 600–638 (EINQKKSEENLKKEDTSSESKKDENVVDAEFEEIKDPKK). Over residues 602–624 (NQKKSEENLKKEDTSSESKKDEN) the composition is skewed to basic and acidic residues.

This sequence belongs to the heat shock protein 70 family.

Functionally, acts as a chaperone. This Buchnera aphidicola subsp. Schizaphis graminum (strain Sg) protein is Chaperone protein DnaK.